Here is an 824-residue protein sequence, read N- to C-terminus: Leucine--tRNA ligase (824 aa).

The short motif at 42-52 (PYPSGRIHMGH) is the 'HIGH' region element. The 'KMSKS' region signature appears at 581–585 (KMSKS). Lys584 contacts ATP.

This sequence belongs to the class-I aminoacyl-tRNA synthetase family.

It is found in the cytoplasm. It carries out the reaction tRNA(Leu) + L-leucine + ATP = L-leucyl-tRNA(Leu) + AMP + diphosphate. The polypeptide is Leucine--tRNA ligase (Geobacter sulfurreducens (strain ATCC 51573 / DSM 12127 / PCA)).